Here is a 411-residue protein sequence, read N- to C-terminus: Multifunctional CCA protein (411 aa).

ATP-binding residues include glycine 8 and arginine 11. CTP-binding residues include glycine 8 and arginine 11. Mg(2+) contacts are provided by aspartate 21 and aspartate 23. 3 residues coordinate ATP: arginine 91, arginine 137, and arginine 140. Residues arginine 91, arginine 137, and arginine 140 each contribute to the CTP site. Positions 228 to 333 (SGVHTLLVIE…LKVFNALDIW (106 aa)) constitute an HD domain.

Belongs to the tRNA nucleotidyltransferase/poly(A) polymerase family. Bacterial CCA-adding enzyme type 1 subfamily. As to quaternary structure, monomer. Can also form homodimers and oligomers. Requires Mg(2+) as cofactor. Ni(2+) is required as a cofactor.

It carries out the reaction a tRNA precursor + 2 CTP + ATP = a tRNA with a 3' CCA end + 3 diphosphate. The catalysed reaction is a tRNA with a 3' CCA end + 2 CTP + ATP = a tRNA with a 3' CCACCA end + 3 diphosphate. Its function is as follows. Catalyzes the addition and repair of the essential 3'-terminal CCA sequence in tRNAs without using a nucleic acid template. Adds these three nucleotides in the order of C, C, and A to the tRNA nucleotide-73, using CTP and ATP as substrates and producing inorganic pyrophosphate. tRNA 3'-terminal CCA addition is required both for tRNA processing and repair. Also involved in tRNA surveillance by mediating tandem CCA addition to generate a CCACCA at the 3' terminus of unstable tRNAs. While stable tRNAs receive only 3'-terminal CCA, unstable tRNAs are marked with CCACCA and rapidly degraded. The polypeptide is Multifunctional CCA protein (Actinobacillus pleuropneumoniae serotype 5b (strain L20)).